Here is a 377-residue protein sequence, read N- to C-terminus: 6-oxocyclohex-1-ene-1-carbonyl-CoA hydrolase (377 aa).

It belongs to the enoyl-CoA hydratase/isomerase family. In terms of assembly, homotetramer.

The enzyme catalyses 6-oxocyclohex-1-ene-1-carbonyl-CoA + 2 H2O = 3-hydroxy-6-carboxyhexanoyl-CoA + H(+). It participates in aromatic compound metabolism; benzoyl-CoA degradation. Its function is as follows. Involved in the central benzoyl-CoA catabolism. Catalyzes the addition of one molecule of water to the double bond and the hydrolytic cleavage of C-C bond in the alicyclic ring, 6-oxocyclohex-1-ene-1-carbonyl-CoA (6-OCH-CoA) to yield 3-hydroxypimelyl-CoA. The chain is 6-oxocyclohex-1-ene-1-carbonyl-CoA hydrolase (oah) from Thauera aromatica.